Consider the following 224-residue polypeptide: UPF0758 protein PD_0117 (224 aa).

In terms of domain architecture, MPN spans 102–224 (SIHDPISAGR…PVSFAEHGWL (123 aa)). Residues H173, H175, and D186 each contribute to the Zn(2+) site. The JAMM motif signature appears at 173–186 (HNHPSGNREPSPAD).

This sequence belongs to the UPF0758 family.

The sequence is that of UPF0758 protein PD_0117 from Xylella fastidiosa (strain Temecula1 / ATCC 700964).